We begin with the raw amino-acid sequence, 397 residues long: Lysophospholipid transporter LplT (397 aa).

At 1 to 17 (MSESVHTNTSLWSKGMK) the chain is on the periplasmic side. The helical transmembrane segment at 18–38 (AVIVAQFLSAFGDNALLFATL) threads the bilayer. The Cytoplasmic segment spans residues 39–52 (ALLKAQFYPEWSQP). A helical membrane pass occupies residues 53-73 (ILQMVFVGAYILFAPFVGQVA). Residues 74–90 (DSFAKGRVMMFANGLKL) are Periplasmic-facing. A helical transmembrane segment spans residues 91–111 (LGAASICFGINPFLGYTLVGV). Over 112-144 (GAAAYSPAKYGILGELTTGSKLVKANGLMEAST) the chain is Cytoplasmic. The helical transmembrane segment at 145–165 (IAAILLGSVAGGVLADWHVLV) threads the bilayer. Ala166 is a topological domain (periplasmic). Residues 167–187 (LAACALAYGGAVVANIYIPKL) traverse the membrane as a helical segment. Residues 188–226 (AAARPGQSWNLINMTRSFLNACTSLWRNGETRFSLVGTS) lie on the Cytoplasmic side of the membrane. A helical transmembrane segment spans residues 227–247 (LFWGAGVTLRFLLVLWVPVAL). The Periplasmic segment spans residues 248–256 (GITDNATPT). Residues 257 to 277 (YLNAMVAIGIVVGAGAAAKLV) form a helical membrane-spanning segment. Residues 278–280 (TLE) lie on the Cytoplasmic side of the membrane. A helical membrane pass occupies residues 281-301 (TVSRCMPAGILIGVVVLIFSL). The Periplasmic portion of the chain corresponds to 302–304 (QHE). A helical membrane pass occupies residues 305–325 (LLPAYALLMLIGVLGGFFVVP). Over 326–343 (LNALLQERGKKSVGAGNA) the chain is Cytoplasmic. The chain crosses the membrane as a helical span at residues 344-364 (IAVQNLGENSAMLLMLGIYSL). At 365 to 366 (AV) the chain is on the periplasmic side. A helical transmembrane segment spans residues 367–387 (MVGIPVVPIGIGFGALFALAI). Over 388–397 (TALWIWQRRH) the chain is Cytoplasmic.

Belongs to the major facilitator superfamily. LplT (TC 2.A.1.42) family.

The protein resides in the cell inner membrane. Functionally, catalyzes the facilitated diffusion of 2-acyl-glycero-3-phosphoethanolamine (2-acyl-GPE) into the cell. The protein is Lysophospholipid transporter LplT of Escherichia coli (strain SMS-3-5 / SECEC).